Consider the following 289-residue polypeptide: Proteasome subunit beta (289 aa).

Residues 1 to 59 (MEHTPRNAGFALPAAYMSTMTSSFIDFLKAEAPDLLPRARVENMPAVPGGGSAFEPPHG) constitute a propeptide, removed in mature form; by autocatalysis. The Nucleophile role is filled by Thr-60.

Belongs to the peptidase T1B family. As to quaternary structure, the 20S proteasome core is composed of 14 alpha and 14 beta subunits that assemble into four stacked heptameric rings, resulting in a barrel-shaped structure. The two inner rings, each composed of seven catalytic beta subunits, are sandwiched by two outer rings, each composed of seven alpha subunits. The catalytic chamber with the active sites is on the inside of the barrel. Has a gated structure, the ends of the cylinder being occluded by the N-termini of the alpha-subunits. Is capped by the proteasome-associated ATPase, ARC.

The protein localises to the cytoplasm. It catalyses the reaction Cleavage of peptide bonds with very broad specificity.. It functions in the pathway protein degradation; proteasomal Pup-dependent pathway. With respect to regulation, the formation of the proteasomal ATPase ARC-20S proteasome complex, likely via the docking of the C-termini of ARC into the intersubunit pockets in the alpha-rings, may trigger opening of the gate for substrate entry. Interconversion between the open-gate and close-gate conformations leads to a dynamic regulation of the 20S proteasome proteolysis activity. Its function is as follows. Component of the proteasome core, a large protease complex with broad specificity involved in protein degradation. This chain is Proteasome subunit beta, found in Saccharomonospora viridis (strain ATCC 15386 / DSM 43017 / JCM 3036 / CCUG 5913 / NBRC 12207 / NCIMB 9602 / P101) (Thermoactinomyces viridis).